A 117-amino-acid polypeptide reads, in one-letter code: Large ribosomal subunit protein bL20 (117 aa).

The protein belongs to the bacterial ribosomal protein bL20 family.

Functionally, binds directly to 23S ribosomal RNA and is necessary for the in vitro assembly process of the 50S ribosomal subunit. It is not involved in the protein synthesizing functions of that subunit. The sequence is that of Large ribosomal subunit protein bL20 from Helicobacter hepaticus (strain ATCC 51449 / 3B1).